The following is a 556-amino-acid chain: Formate--tetrahydrofolate ligase (556 aa).

ATP is bound at residue T65 to S72.

The protein belongs to the formate--tetrahydrofolate ligase family.

The catalysed reaction is (6S)-5,6,7,8-tetrahydrofolate + formate + ATP = (6R)-10-formyltetrahydrofolate + ADP + phosphate. It functions in the pathway one-carbon metabolism; tetrahydrofolate interconversion. The polypeptide is Formate--tetrahydrofolate ligase (Streptococcus pneumoniae (strain Taiwan19F-14)).